A 592-amino-acid polypeptide reads, in one-letter code: Transmembrane 9 superfamily member 3 (592 aa).

The signal sequence occupies residues 1-19; sequence MRLPTTLLLFIGALIFSGA. The Lumenal portion of the chain corresponds to 20-229; it reads GTVRSDASDH…SLPHHLEIHW (210 aa). A helical transmembrane segment spans residues 230 to 250; sequence FSIINSCVTVLLLTGFLATIL. The Cytoplasmic segment spans residues 251 to 302; sequence MRVLKNDFMKYAQDEEAADDQEETGWKYIHGDVFRFPKNKSLFAASLGSGTQ. The chain crosses the membrane as a helical span at residues 303 to 323; the sequence is LFTLTIFIFMLSLVGVFYPYN. Residues 324-325 are Lumenal-facing; sequence RG. Residues 326–346 traverse the membrane as a helical segment; sequence ALFTALVVIYALTSGIAGYTA. At 347–365 the chain is on the cytoplasmic side; sequence SSFYCQLEGKNWVRNLLLT. A helical transmembrane segment spans residues 366–386; it reads GGLFCGPLFLTFCFLNTVAIA. The Lumenal segment spans residues 387 to 397; sequence YSATAALPFGT. Residues 398 to 418 form a helical membrane-spanning segment; the sequence is IIVIVLIWTLVTSPLLVLGGI. Residues 419-452 are Cytoplasmic-facing; the sequence is AGKNSKAEFQAPVRTTKYPREIPPLPWYRSAVPQ. The helical transmembrane segment at 453-473 threads the bilayer; it reads MAMAGFLPFSAIYIELYYIFA. Residues 474-485 lie on the Lumenal side of the membrane; that stretch reads SVWGHRIYTIYS. The chain crosses the membrane as a helical span at residues 486–506; the sequence is ILFIVFIILLIVTAFITVALT. Residues 507 to 521 lie on the Cytoplasmic side of the membrane; the sequence is YFQLAAEDHEWWWRS. Residues 522–542 form a helical membrane-spanning segment; it reads FLCGGSTGLFIYAYCLYYYYA. Topologically, residues 543-553 are lumenal; that stretch reads RSDMSGFMQTS. The chain crosses the membrane as a helical span at residues 554 to 574; that stretch reads FFFGYMACICYGFFLMLGTVG. The Cytoplasmic segment spans residues 575–592; sequence FRAALLFVRHIYRSIKCE. An Endoplasmic reticulum export signal motif is present at residues 581–586; the sequence is FVRHIY. Residues 590–592 carry the Golgi retention signal motif; sequence KCE.

This sequence belongs to the nonaspanin (TM9SF) (TC 9.A.2) family.

The protein resides in the endosome membrane. Its subcellular location is the golgi apparatus membrane. This Arabidopsis thaliana (Mouse-ear cress) protein is Transmembrane 9 superfamily member 3.